Reading from the N-terminus, the 467-residue chain is Tyrosine phenol-lyase (467 aa).

The residue at position 268 (Lys268) is an N6-(pyridoxal phosphate)lysine.

Belongs to the beta-eliminating lyase family. Homotetramer. The cofactor is pyridoxal 5'-phosphate.

It catalyses the reaction L-tyrosine + H2O = phenol + pyruvate + NH4(+). In Nostoc punctiforme (strain ATCC 29133 / PCC 73102), this protein is Tyrosine phenol-lyase.